The sequence spans 181 residues: MSDNSPTTPSAPAPEEVEAAMAAHADDELARLQGELAELKAKSAELADQFLRAKAEAENARRRAEDEVAKARKFGIESFAESLLPVADSLDAALAIKEATPQQLREGADATLRQLTSTLERNKVLAINPAAGTKFDPHQHQAISVVPAEQEANTVVAVLQKGYVIAERVLRPALVTVSASK.

Belongs to the GrpE family. In terms of assembly, homodimer.

The protein resides in the cytoplasm. In terms of biological role, participates actively in the response to hyperosmotic and heat shock by preventing the aggregation of stress-denatured proteins, in association with DnaK and GrpE. It is the nucleotide exchange factor for DnaK and may function as a thermosensor. Unfolded proteins bind initially to DnaJ; upon interaction with the DnaJ-bound protein, DnaK hydrolyzes its bound ATP, resulting in the formation of a stable complex. GrpE releases ADP from DnaK; ATP binding to DnaK triggers the release of the substrate protein, thus completing the reaction cycle. Several rounds of ATP-dependent interactions between DnaJ, DnaK and GrpE are required for fully efficient folding. The protein is Protein GrpE of Verminephrobacter eiseniae (strain EF01-2).